Reading from the N-terminus, the 400-residue chain is Enoyl-[acyl-carrier-protein] reductase [NADH] 1 (400 aa).

Residues 48-53 (GASSGY), 74-75 (FE), 111-112 (DA), and 139-140 (LA) each bind NAD(+). Tyr225 contributes to the substrate binding site. Tyr235 functions as the Proton donor in the catalytic mechanism. NAD(+) is bound by residues Lys244 and 273–275 (VVT).

This sequence belongs to the TER reductase family. As to quaternary structure, monomer.

It carries out the reaction a 2,3-saturated acyl-[ACP] + NAD(+) = a (2E)-enoyl-[ACP] + NADH + H(+). The protein operates within lipid metabolism; fatty acid biosynthesis. Functionally, involved in the final reduction of the elongation cycle of fatty acid synthesis (FAS II). Catalyzes the reduction of a carbon-carbon double bond in an enoyl moiety that is covalently linked to an acyl carrier protein (ACP). This is Enoyl-[acyl-carrier-protein] reductase [NADH] 1 from Vibrio vulnificus (strain YJ016).